We begin with the raw amino-acid sequence, 904 residues long: Phosphoenolpyruvate carboxylase (904 aa).

Catalysis depends on residues His-151 and Lys-570.

The protein belongs to the PEPCase type 1 family. Requires Mg(2+) as cofactor.

The enzyme catalyses oxaloacetate + phosphate = phosphoenolpyruvate + hydrogencarbonate. Functionally, forms oxaloacetate, a four-carbon dicarboxylic acid source for the tricarboxylic acid cycle. This chain is Phosphoenolpyruvate carboxylase, found in Xanthomonas campestris pv. campestris (strain ATCC 33913 / DSM 3586 / NCPPB 528 / LMG 568 / P 25).